Reading from the N-terminus, the 198-residue chain is MVSTEIEALVQQLARLPGLGPRSARRAVLHLMKKRESAFAPLLAALQTVSERLVTCTTCGNIDTHDPCAICADPRRDARSLCVVEEVSDLWALDKSRLFPGKYHVLGGRLSALEGVRPQDLSIDALVTRVAAGGIDEVVLAMNATLEGQTTAHYLAERLEGYPVRLTQLAHGLPVGGELDYLDEGTLAQALRARRPVG.

The C4-type zinc-finger motif lies at 56–71; sequence CTTCGNIDTHDPCAIC. The Toprim domain occupies 79–174; that stretch reads RSLCVVEEVS…RLTQLAHGLP (96 aa).

It belongs to the RecR family.

Its function is as follows. May play a role in DNA repair. It seems to be involved in an RecBC-independent recombinational process of DNA repair. It may act with RecF and RecO. The chain is Recombination protein RecR from Sphingopyxis alaskensis (strain DSM 13593 / LMG 18877 / RB2256) (Sphingomonas alaskensis).